Here is a 207-residue protein sequence, read N- to C-terminus: Large ribosomal subunit protein uL4 (207 aa).

Residues 52 to 77 (RGWADVSGGGRKPWRQKGTGRARAGS) form a disordered region.

Belongs to the universal ribosomal protein uL4 family. As to quaternary structure, part of the 50S ribosomal subunit.

Its function is as follows. One of the primary rRNA binding proteins, this protein initially binds near the 5'-end of the 23S rRNA. It is important during the early stages of 50S assembly. It makes multiple contacts with different domains of the 23S rRNA in the assembled 50S subunit and ribosome. In terms of biological role, forms part of the polypeptide exit tunnel. This chain is Large ribosomal subunit protein uL4, found in Moorella thermoacetica (strain ATCC 39073 / JCM 9320).